A 135-amino-acid chain; its full sequence is DNA-binding protein H-NS homolog (135 aa).

Residues glutamine 112–serine 117 mediate DNA binding.

The protein belongs to the histone-like protein H-NS family. As to quaternary structure, homodimer that oligomerizes on DNA into higher-order complexes that form bridges between disparate regions of DNA compacting it.

It is found in the cytoplasm. It localises to the nucleoid. Functionally, a DNA-binding protein implicated in transcriptional repression and chromosome organization and compaction. Binds nucleation sites in AT-rich DNA and bridges them, forming higher-order nucleoprotein complexes and condensing the chromosome. A subset of genes are repressed by H-NS in association with other proteins. In Buchnera aphidicola subsp. Acyrthosiphon pisum (strain APS) (Acyrthosiphon pisum symbiotic bacterium), this protein is DNA-binding protein H-NS homolog (hns).